The primary structure comprises 188 residues: Early nodulin-like protein 5 (188 aa).

Residues 1–24 form the signal peptide; it reads MDSSKKIIIVMFLVTFYMFSCVSS. The Phytocyanin domain occupies 25–128; that stretch reads TEFEVGGENG…GQKMIVKVME (104 aa). An intrachain disulfide couples cysteine 82 to cysteine 116. A disordered region spans residues 127 to 157; it reads METESSTESPPPSSSSSSSSSSSLPASTPKA. Residues 129–155 are compositionally biased toward low complexity; that stretch reads TESSTESPPPSSSSSSSSSSSLPASTP. Residue serine 170 is the site of GPI-anchor amidated serine attachment. The propeptide at 171-188 is removed in mature form; that stretch reads SSGFVVSAVLIVSVFGLV.

The protein belongs to the early nodulin-like (ENODL) family. In terms of tissue distribution, mostly expressed in leaves and flowers, and, to a lower extent, in stems.

Its subcellular location is the cell membrane. In terms of biological role, may act as a carbohydrate transporter. Mainly required for reproductive functions. The sequence is that of Early nodulin-like protein 5 from Arabidopsis thaliana (Mouse-ear cress).